Here is a 267-residue protein sequence, read N- to C-terminus: 2-keto-3-deoxy-L-rhamnonate aldolase (267 aa).

The Proton acceptor role is filled by histidine 49. Substrate is bound at residue glutamine 151. Glutamate 153 is a Mg(2+) binding site. Alanine 178 and aspartate 179 together coordinate substrate. Aspartate 179 is a Mg(2+) binding site.

Belongs to the HpcH/HpaI aldolase family. KDR aldolase subfamily. Homohexamer. Requires Mg(2+) as cofactor.

It carries out the reaction 2-dehydro-3-deoxy-L-rhamnonate = (S)-lactaldehyde + pyruvate. Functionally, catalyzes the reversible retro-aldol cleavage of 2-keto-3-deoxy-L-rhamnonate (KDR) to pyruvate and lactaldehyde. The polypeptide is 2-keto-3-deoxy-L-rhamnonate aldolase (Shigella sonnei (strain Ss046)).